The following is a 288-amino-acid chain: MQGVFPAIITPFKNGGVDYEGLEQNINFLIDNGVNGIVSVGTTGESPTLSHDEHKKIIEKSVSVCDGKVDVIAGAGSNSTEEAIALSQFAEDVGADSVLLITPYYNKPTQEGLKQHFSKIAESINIPIVLYNVPSRTAVNLQPETIKYLYEEYSNITTVKEANPDLSHISDVINSCDISVLSGNDELTLPVISLGGNGVISVVANIVPNEFVQMVNYANEGKFKEAREIHYKLFNLMKSLFIETNPVPIKTAMNLLNMPAGDLRLPLCKMEEENKFKLETALKEYGLL.

Thr-43 lines the pyruvate pocket. The active-site Proton donor/acceptor is Tyr-131. Catalysis depends on Lys-160, which acts as the Schiff-base intermediate with substrate. Residue Ile-200 coordinates pyruvate.

This sequence belongs to the DapA family. As to quaternary structure, homotetramer; dimer of dimers.

It localises to the cytoplasm. It carries out the reaction L-aspartate 4-semialdehyde + pyruvate = (2S,4S)-4-hydroxy-2,3,4,5-tetrahydrodipicolinate + H2O + H(+). It participates in amino-acid biosynthesis; L-lysine biosynthesis via DAP pathway; (S)-tetrahydrodipicolinate from L-aspartate: step 3/4. Catalyzes the condensation of (S)-aspartate-beta-semialdehyde [(S)-ASA] and pyruvate to 4-hydroxy-tetrahydrodipicolinate (HTPA). The protein is 4-hydroxy-tetrahydrodipicolinate synthase of Methanococcus aeolicus (strain ATCC BAA-1280 / DSM 17508 / OCM 812 / Nankai-3).